The sequence spans 53 residues: MCATYMFNITVIITHPTPTLRTRGPGFVRNRDLYIYKYKSNLINNLNNMTYIL.

It localises to the mitochondrion. This is an uncharacterized protein from Saccharomyces cerevisiae (strain ATCC 204508 / S288c) (Baker's yeast).